Consider the following 384-residue polypeptide: 8-amino-7-oxononanoate synthase (384 aa).

Substrate is bound at residue R21. G108–F109 contributes to the pyridoxal 5'-phosphate binding site. H133 lines the substrate pocket. 3 residues coordinate pyridoxal 5'-phosphate: S179, H207, and T233. An N6-(pyridoxal phosphate)lysine modification is found at K236. T352 contacts substrate.

This sequence belongs to the class-II pyridoxal-phosphate-dependent aminotransferase family. BioF subfamily. Homodimer. Requires pyridoxal 5'-phosphate as cofactor.

It carries out the reaction 6-carboxyhexanoyl-[ACP] + L-alanine + H(+) = (8S)-8-amino-7-oxononanoate + holo-[ACP] + CO2. The protein operates within cofactor biosynthesis; biotin biosynthesis. Its function is as follows. Catalyzes the decarboxylative condensation of pimeloyl-[acyl-carrier protein] and L-alanine to produce 8-amino-7-oxononanoate (AON), [acyl-carrier protein], and carbon dioxide. This is 8-amino-7-oxononanoate synthase from Escherichia coli O9:H4 (strain HS).